Consider the following 209-residue polypeptide: Ribosomal RNA large subunit methyltransferase E (209 aa).

S-adenosyl-L-methionine is bound by residues Gly-63, Trp-65, Asp-83, Asp-99, and Asp-124. The active-site Proton acceptor is the Lys-164.

Belongs to the class I-like SAM-binding methyltransferase superfamily. RNA methyltransferase RlmE family.

The protein resides in the cytoplasm. It catalyses the reaction uridine(2552) in 23S rRNA + S-adenosyl-L-methionine = 2'-O-methyluridine(2552) in 23S rRNA + S-adenosyl-L-homocysteine + H(+). Its function is as follows. Specifically methylates the uridine in position 2552 of 23S rRNA at the 2'-O position of the ribose in the fully assembled 50S ribosomal subunit. The chain is Ribosomal RNA large subunit methyltransferase E from Shewanella amazonensis (strain ATCC BAA-1098 / SB2B).